The sequence spans 668 residues: DNA ligase (668 aa).

NAD(+) contacts are provided by residues 31-35 (DAEYD), 80-81 (SL), and E112. The N6-AMP-lysine intermediate role is filled by K114. NAD(+) contacts are provided by R135, E172, K289, and K313. Residues C407, C410, C425, and C431 each contribute to the Zn(2+) site. Residues 591-668 (SVPQPLAGKV…NEEQLIELLN (78 aa)) enclose the BRCT domain.

Belongs to the NAD-dependent DNA ligase family. LigA subfamily. It depends on Mg(2+) as a cofactor. Mn(2+) is required as a cofactor.

It catalyses the reaction NAD(+) + (deoxyribonucleotide)n-3'-hydroxyl + 5'-phospho-(deoxyribonucleotide)m = (deoxyribonucleotide)n+m + AMP + beta-nicotinamide D-nucleotide.. Functionally, DNA ligase that catalyzes the formation of phosphodiester linkages between 5'-phosphoryl and 3'-hydroxyl groups in double-stranded DNA using NAD as a coenzyme and as the energy source for the reaction. It is essential for DNA replication and repair of damaged DNA. This Aliivibrio fischeri (strain MJ11) (Vibrio fischeri) protein is DNA ligase.